The following is a 497-amino-acid chain: WASH complex subunit homolog 1 (497 aa).

The interval 306–497 is disordered; sequence EASEPTEAEA…PPNFDDEEWD (192 aa). A compositionally biased stretch (pro residues) spans 323-339; that stretch reads LPPPPPPMKLDPSPQPA. Low complexity predominate over residues 341-350; it reads TPVEITEIPP. The segment covering 351 to 372 has biased composition (pro residues); it reads IISPPAPPPPPPPPPPPPPPQT. The region spanning 390 to 412 is the WH2 domain; that stretch reads GRSDLMAAIRAAGGAGNAKLSRI.

The protein belongs to the WASH1 family. As to quaternary structure, component of the WASH core complex. Component of the DHIC (ddl-1-containing hsf-1 inhibitory) complex, which contains at least ddl-1, ddl-2, hsb-1 and hsf-1. Within the complex, interacts with ddl-1. Formation of the DHIC may be dependent upon the Insulin/IGF-1-like signaling (IIS) mediated pathway. In terms of tissue distribution, expressed in several neurons located throughout the body.

Functionally, acts as a component of the WASH core complex that functions as a nucleation-promoting factor (NPF) at the surface of endosomes, where it recruits and activates the Arp2/3 complex to induce actin polymerization, playing a key role in the fission of tubules that serve as transport intermediates during endosome sorting. Acts as a component of the DHIC (ddl-1-containing hsf-1 inhibitory complex) which modulates lifespan by sequestering the heat shock transcription factor hsf-1 to negatively regulate its binding to DNA and its transcriptional activity. The chain is WASH complex subunit homolog 1 from Caenorhabditis elegans.